The primary structure comprises 90 residues: Small ribosomal subunit protein uS15c (90 aa).

Belongs to the universal ribosomal protein uS15 family. In terms of assembly, part of the 30S ribosomal subunit.

Its subcellular location is the plastid. The protein localises to the chloroplast. This chain is Small ribosomal subunit protein uS15c (rps15), found in Citrus sinensis (Sweet orange).